The primary structure comprises 1169 residues: Transcription-repair-coupling factor (1169 aa).

Residues 634-795 (DMERARPMDR…MLGVRDLSVI (162 aa)) enclose the Helicase ATP-binding domain. Residue 647-654 (GDVGYGKT) participates in ATP binding. Residues 748–751 (DEEQ) carry the DEEQ box motif. The region spanning 809–970 (VLEQNTNFIK…GFKIAMRDLN (162 aa)) is the Helicase C-terminal domain.

The protein in the N-terminal section; belongs to the UvrB family. It in the C-terminal section; belongs to the helicase family. RecG subfamily.

The protein localises to the cytoplasm. Functionally, couples transcription and DNA repair by recognizing RNA polymerase (RNAP) stalled at DNA lesions. Mediates ATP-dependent release of RNAP and its truncated transcript from the DNA, and recruitment of nucleotide excision repair machinery to the damaged site. The sequence is that of Transcription-repair-coupling factor from Staphylococcus epidermidis (strain ATCC 12228 / FDA PCI 1200).